The following is a 322-amino-acid chain: Aspartate carbamoyltransferase catalytic subunit (322 aa).

The carbamoyl phosphate site is built by arginine 65 and threonine 66. Position 93 (lysine 93) interacts with L-aspartate. The carbamoyl phosphate site is built by arginine 115, histidine 143, and glutamine 146. The L-aspartate site is built by arginine 176 and arginine 230. Carbamoyl phosphate is bound by residues glycine 271 and proline 272.

The protein belongs to the aspartate/ornithine carbamoyltransferase superfamily. ATCase family. Heterododecamer (2C3:3R2) of six catalytic PyrB chains organized as two trimers (C3), and six regulatory PyrI chains organized as three dimers (R2).

The catalysed reaction is carbamoyl phosphate + L-aspartate = N-carbamoyl-L-aspartate + phosphate + H(+). The protein operates within pyrimidine metabolism; UMP biosynthesis via de novo pathway; (S)-dihydroorotate from bicarbonate: step 2/3. Catalyzes the condensation of carbamoyl phosphate and aspartate to form carbamoyl aspartate and inorganic phosphate, the committed step in the de novo pyrimidine nucleotide biosynthesis pathway. The polypeptide is Aspartate carbamoyltransferase catalytic subunit (Brucella anthropi (strain ATCC 49188 / DSM 6882 / CCUG 24695 / JCM 21032 / LMG 3331 / NBRC 15819 / NCTC 12168 / Alc 37) (Ochrobactrum anthropi)).